The chain runs to 273 residues: Diaminopimelate epimerase (273 aa).

Positions 11 and 60 each coordinate substrate. Cys69 functions as the Proton donor in the catalytic mechanism. Substrate contacts are provided by residues 70-71, Asn181, and 199-200; these read GN and ER. Cys209 (proton acceptor) is an active-site residue. 210-211 is a binding site for substrate; the sequence is GT.

This sequence belongs to the diaminopimelate epimerase family. As to quaternary structure, homodimer.

It localises to the cytoplasm. It catalyses the reaction (2S,6S)-2,6-diaminopimelate = meso-2,6-diaminopimelate. It participates in amino-acid biosynthesis; L-lysine biosynthesis via DAP pathway; DL-2,6-diaminopimelate from LL-2,6-diaminopimelate: step 1/1. Catalyzes the stereoinversion of LL-2,6-diaminopimelate (L,L-DAP) to meso-diaminopimelate (meso-DAP), a precursor of L-lysine and an essential component of the bacterial peptidoglycan. The sequence is that of Diaminopimelate epimerase from Helicobacter pylori (strain ATCC 700392 / 26695) (Campylobacter pylori).